The sequence spans 448 residues: Adenylyltransferase and sulfurtransferase UBA4 (448 aa).

Residues glycine 88, aspartate 109, 116 to 120 (SNLHR), lysine 133, and 177 to 178 (DT) each bind ATP. 2 residues coordinate Zn(2+): cysteine 219 and cysteine 222. The Glycyl thioester intermediate; for adenylyltransferase activity role is filled by cysteine 236. 2 residues coordinate Zn(2+): cysteine 297 and cysteine 300. The 98-residue stretch at 349–446 (QGENSILIDV…WSKEIDSKIP (98 aa)) folds into the Rhodanese domain. Cysteine 405 functions as the Cysteine persulfide intermediate; for sulfurtransferase activity in the catalytic mechanism.

It in the N-terminal section; belongs to the HesA/MoeB/ThiF family. UBA4 subfamily. It depends on Zn(2+) as a cofactor.

The protein localises to the cytoplasm. Its subcellular location is the cytosol. Its pathway is tRNA modification; 5-methoxycarbonylmethyl-2-thiouridine-tRNA biosynthesis. Its function is as follows. Plays a central role in 2-thiolation of mcm(5)S(2)U at tRNA wobble positions of cytosolic tRNA(Lys), tRNA(Glu) and tRNA(Gln). Acts by mediating the C-terminal thiocarboxylation of sulfur carrier URM1. Its N-terminus first activates URM1 as acyl-adenylate (-COAMP), then the persulfide sulfur on the catalytic cysteine is transferred to URM1 to form thiocarboxylation (-COSH) of its C-terminus. The reaction probably involves hydrogen sulfide that is generated from the persulfide intermediate and that acts as a nucleophile towards URM1. Subsequently, a transient disulfide bond is formed. Does not use thiosulfate as sulfur donor; NFS1 probably acting as a sulfur donor for thiocarboxylation reactions. Prior mcm(5) tRNA modification by the elongator complex is required for 2-thiolation. May also be involved in protein urmylation. The sequence is that of Adenylyltransferase and sulfurtransferase UBA4 from Debaryomyces hansenii (strain ATCC 36239 / CBS 767 / BCRC 21394 / JCM 1990 / NBRC 0083 / IGC 2968) (Yeast).